Here is a 492-residue protein sequence, read N- to C-terminus: Glutamyl-tRNA(Gln) amidotransferase subunit A, mitochondrial (492 aa).

Catalysis depends on charge relay system residues K78 and S159. The Acyl-ester intermediate role is filled by S183.

It belongs to the amidase family. GatA subfamily. In terms of assembly, subunit of the heterotrimeric GatCAB amidotransferase (AdT) complex, composed of A, B and C subunits.

Its subcellular location is the mitochondrion. The catalysed reaction is L-glutamyl-tRNA(Gln) + L-glutamine + ATP + H2O = L-glutaminyl-tRNA(Gln) + L-glutamate + ADP + phosphate + H(+). Functionally, allows the formation of correctly charged Gln-tRNA(Gln) through the transamidation of misacylated Glu-tRNA(Gln) in the mitochondria. The reaction takes place in the presence of glutamine and ATP through an activated gamma-phospho-Glu-tRNA(Gln). This is Glutamyl-tRNA(Gln) amidotransferase subunit A, mitochondrial from Anopheles gambiae (African malaria mosquito).